Here is a 25-residue protein sequence, read N- to C-terminus: Cysteine-rich venom protein 25 (25 aa).

The tract at residues 1–25 (NVDFNSESTRRKKKQKEIVDLXNSL) is disordered.

This sequence belongs to the CRISP family. In terms of processing, contains 8 disulfide bonds. In terms of tissue distribution, expressed by the venom gland.

It is found in the secreted. This is Cysteine-rich venom protein 25 from Naja haje haje (Egyptian cobra).